Consider the following 212-residue polypeptide: Thymidylate kinase (212 aa).

The residue at position 2 (Ala-2) is an N-acetylalanine. ATP-binding positions include 16 to 21 and Arg-97; that span reads RAGKTT. Residues 133–157 are LID; it reads LQLQLLDAAARGEFGLERYETGTFQ. Residues Lys-182 and Arg-192 each coordinate ATP.

It belongs to the thymidylate kinase family. In terms of assembly, homodimer. Mg(2+) is required as a cofactor.

The catalysed reaction is dTMP + ATP = dTDP + ADP. It functions in the pathway pyrimidine metabolism; dTTP biosynthesis. In terms of biological role, catalyzes the phosphorylation of thymidine monophosphate (dTMP) to thymidine diphosphate (dTDP), the immediate precursor for the DNA building block dTTP, with ATP as the preferred phosphoryl donor in the presence of Mg(2+). This chain is Thymidylate kinase (Dtymk), found in Mus musculus (Mouse).